Consider the following 258-residue polypeptide: uncharacterized protein (258 aa).

An N-terminal signal peptide occupies residues 1-23 (MVWCHYILLVLTFFLFTTFFTAA). Residues 24 to 64 (CPAIFTWLNSLFRLSNDSPHVVHTSIAEVGDIEDGRVDKDG) lie on the Cytoplasmic side of the membrane. A helical membrane pass occupies residues 65–85 (VLFVDLEFFLGCLPFFFFALV). The Extracellular portion of the chain corresponds to 86–123 (DQSSSSSVCKPLSPSDAKRSSNSLLRLSLVSSNDSDSS). A glycan (N-linked (GlcNAc...) asparagine) is linked at Asn118. A helical membrane pass occupies residues 124-144 (VSVSTFAFFFFFLFFLFFVFT). The Cytoplasmic portion of the chain corresponds to 145–230 (CTFSSELTSS…SSSISFRISS (86 aa)). Residues 231-251 (IFFLCSLVFMWFFNCFSDLNV) traverse the membrane as a helical segment. Residues 252–258 (LLQIKHS) are Extracellular-facing.

It localises to the membrane. This is an uncharacterized protein from Saccharomyces cerevisiae (strain ATCC 204508 / S288c) (Baker's yeast).